A 286-amino-acid polypeptide reads, in one-letter code: Bifunctional protein FolD (286 aa).

NADP(+)-binding positions include 168-170 (GRG), Thr195, and Val236.

The protein belongs to the tetrahydrofolate dehydrogenase/cyclohydrolase family. As to quaternary structure, homodimer.

It carries out the reaction (6R)-5,10-methylene-5,6,7,8-tetrahydrofolate + NADP(+) = (6R)-5,10-methenyltetrahydrofolate + NADPH. The enzyme catalyses (6R)-5,10-methenyltetrahydrofolate + H2O = (6R)-10-formyltetrahydrofolate + H(+). It participates in one-carbon metabolism; tetrahydrofolate interconversion. Its function is as follows. Catalyzes the oxidation of 5,10-methylenetetrahydrofolate to 5,10-methenyltetrahydrofolate and then the hydrolysis of 5,10-methenyltetrahydrofolate to 10-formyltetrahydrofolate. The chain is Bifunctional protein FolD from Mycolicibacterium gilvum (strain PYR-GCK) (Mycobacterium gilvum (strain PYR-GCK)).